Consider the following 579-residue polypeptide: Acyl-coenzyme A synthetase ACSM5, mitochondrial (579 aa).

The transit peptide at 1–26 (MRPWLRHLVLQALRNSRAFCGSHGKP) directs the protein to the mitochondrion. Lys-97 carries the N6-acetyllysine; alternate modification. Position 97 is an N6-succinyllysine; alternate (Lys-97). Lys-152 carries the post-translational modification N6-acetyllysine. 230 to 238 (TSGTTGAPK) contributes to the ATP binding site. Residue Lys-303 is modified to N6-acetyllysine; alternate. Lys-303 is subject to N6-succinyllysine; alternate. ATP contacts are provided by residues 368–373 (EGYGQS), Asp-455, Arg-470, and Lys-566.

Belongs to the ATP-dependent AMP-binding enzyme family. The cofactor is Mg(2+). Requires Mn(2+) as cofactor. As to expression, detected in kidney and liver.

It localises to the mitochondrion matrix. The catalysed reaction is a medium-chain fatty acid + ATP + CoA = a medium-chain fatty acyl-CoA + AMP + diphosphate. Functionally, catalyzes the activation of fatty acids by CoA to produce an acyl-CoA, the first step in fatty acid metabolism. In Homo sapiens (Human), this protein is Acyl-coenzyme A synthetase ACSM5, mitochondrial (ACSM5).